A 453-amino-acid polypeptide reads, in one-letter code: Nuclear and cytoplasmic polyadenylated RNA-binding protein PUB1 (453 aa).

Positions 1–67 are disordered; it reads MSENNEEQHQ…PSVVPANAIT (67 aa). Ser-2 carries the post-translational modification N-acetylserine. 2 consecutive RRM domains span residues 75-152 and 162-240; these read RVLY…WAFQ and FNLF…WAAK. The segment at 241–262 is disordered; it reads RDNNNNNNYQQRRNYGNNNRGG. Residues 244–262 show a composition bias toward low complexity; the sequence is NNNNNYQQRRNYGNNNRGG. Arg-260 is subject to Omega-N-methylarginine. The tract at residues 260-264 is RNA-binding RGG-box; that stretch reads RGGFR. The 73-residue stretch at 341–413 folds into the RRM 3 domain; sequence TTAYIGNIPH…RNLRTGWGKE (73 aa). The segment at 419 to 453 is disordered; the sequence is PQQQQQGGQPLIMNDQQQPVMSEQQQQQQQQQQQQ. The span at 434 to 453 shows a compositional bias: low complexity; that stretch reads QQQPVMSEQQQQQQQQQQQQ.

Interacts with NAB2.

It is found in the cytoplasm. It localises to the nucleus. The protein localises to the P-body. Its subcellular location is the stress granule. Functionally, may be associated with hnRNA within the nucleus and remains associated during nucleocytoplasmic mRNA transport, once the proteins are in the cytoplasm, disassembly of PUB1-RNA complexes may occur prior to PAB1 binding and formation of a translationally competent RNP complex. Binds to polyadenylated RNA; prefers to bind poly(rU); binds to T-rich single-stranded DNA. This Saccharomyces cerevisiae (strain ATCC 204508 / S288c) (Baker's yeast) protein is Nuclear and cytoplasmic polyadenylated RNA-binding protein PUB1.